The sequence spans 214 residues: uncharacterized protein (214 aa).

5 consecutive transmembrane segments (helical) span residues 33–53 (VILF…ILVV), 104–124 (ILGI…SYVL), 132–152 (FIYL…LSAS), 153–173 (GGVL…FGTK), and 186–206 (LLIL…TITF).

It is found in the cell membrane. This is an uncharacterized protein from Methanocaldococcus jannaschii (strain ATCC 43067 / DSM 2661 / JAL-1 / JCM 10045 / NBRC 100440) (Methanococcus jannaschii).